Consider the following 444-residue polypeptide: Orexin receptor type 2 (444 aa).

Residues 1-10 (MSGTKLEDSP) show a composition bias toward basic and acidic residues. The tract at residues 1–30 (MSGTKLEDSPPCRNWSSAPELNETQEPFLN) is disordered. At 1–54 (MSGTKLEDSPPCRNWSSAPELNETQEPFLNPTDYDDEEFLRYLWREYLHPKEYE) the chain is on the extracellular side. 2 N-linked (GlcNAc...) asparagine glycosylation sites follow: N14 and N22. Polar residues predominate over residues 14–27 (NWSSAPELNETQEP). Positions 33 to 49 (DYDDEEFLRYLWREYLH) are required for response to orexin-A. Residues 55 to 75 (WVLIAGYIIVFVVALIGNVLV) form a helical membrane-spanning segment. Over 76–88 (CVAVWKNHHMRTV) the chain is Cytoplasmic. A helical membrane pass occupies residues 89-110 (TNYFIVNLSLADVLVTITCLPA). The Extracellular segment spans residues 111-127 (TLVVDITETWFFGQSLC). A disulfide bridge links C127 with C210. Residues 128-150 (KVIPYLQTVSVSVSVLTLSCIAL) traverse the membrane as a helical segment. Residues 151-170 (DRWYAICHPLMFKSTAKRAR) lie on the Cytoplasmic side of the membrane. A helical membrane pass occupies residues 171 to 191 (NSIVIIWIVSCIIMIPQAIVM). Over 192–222 (ECSTMLPGLANKTTLFTVCDERWGGEIYPKM) the chain is Extracellular. N-linked (GlcNAc...) asparagine glycosylation is present at N202. A helical transmembrane segment spans residues 223-243 (YHICFFLVTYMAPLCLMVLAY). Residues 244-304 (LQIFRKLWCR…QIRARRKTAR (61 aa)) lie on the Cytoplasmic side of the membrane. The helical transmembrane segment at 305-326 (MLMVVLLVFAICYLPISILNVL) threads the bilayer. Residues 327–342 (KRVFGMFTHTEDRETV) are Extracellular-facing. Residues 343–366 (YAWFTFSHWLVYANSAANPIIYNF) form a helical membrane-spanning segment. The Cytoplasmic portion of the chain corresponds to 367-444 (LSGKFREEFK…ANGAGQLQNW (78 aa)).

This sequence belongs to the G-protein coupled receptor 1 family.

It localises to the cell membrane. Functionally, nonselective, high-affinity receptor for both orexin-A and orexin-B neuropeptides. Triggers an increase in cytoplasmic Ca(2+) levels in response to orexin-A binding. This chain is Orexin receptor type 2 (HCRTR2), found in Sus scrofa (Pig).